A 214-amino-acid polypeptide reads, in one-letter code: Ribonuclease P protein component 3 (214 aa).

Belongs to the eukaryotic/archaeal RNase P protein component 3 family. Consists of a catalytic RNA component and at least 4-5 protein subunits. Forms a subcomplex with Rnp2 which stimulates the catalytic RNA.

It is found in the cytoplasm. It catalyses the reaction Endonucleolytic cleavage of RNA, removing 5'-extranucleotides from tRNA precursor.. Functionally, part of ribonuclease P, a protein complex that generates mature tRNA molecules by cleaving their 5'-ends. The RNA is catalytic, but its KM for pre-tRNA is 170-fold decreased in the presence of the 4 known protein subunits (Rnp1-4). The protein subunits also decrease the amount of Mg(2+) needed for activity. The polypeptide is Ribonuclease P protein component 3 (Pyrococcus furiosus (strain ATCC 43587 / DSM 3638 / JCM 8422 / Vc1)).